The following is a 436-amino-acid chain: MRIVVLGAGVVGVTSAYELARAGHEVTVVDRQPAAALETSFANAGEISPGYASPWAAPGIPAKALRWMFMKHAPLVIRPRLDAAQVRFLLAILRNCTPAAYAQNKGRMVRLAEYSRDCLTDLRATTGLAFDERQQGTLQLFRSQKQLDAAARDIEVLRAGGVPFELLDADGCLAAEPGLRAARDRIAGGLRLTGDETGDCFKFTQGLAGLAEEGGVRFRYGTGVERLRVEGGRVTGVETTKGTFLADAVVVALGSHSPALVAPLGLRLPVYPVKGYSITVPIVDADRAPVSTVMDETYKIAITRLGTRIRVGGMAEVAGFSATLPPARRETLAMSVNDLFGGAGDLSRASFWTGLRPMTPDGTPVVGRTPVAGLWLNTGHGTLGWTMAAGSARVLSDLIDGRAPEIESADLGIERYAAPGRRARPAVRLNPARQAG.

An FAD-binding site is contributed by 3–17; sequence IVVLGAGVVGVTSAY.

The protein belongs to the DadA oxidoreductase family. FAD is required as a cofactor.

The catalysed reaction is a D-alpha-amino acid + A + H2O = a 2-oxocarboxylate + AH2 + NH4(+). It participates in amino-acid degradation; D-alanine degradation; NH(3) and pyruvate from D-alanine: step 1/1. In terms of biological role, oxidative deamination of D-amino acids. The polypeptide is D-amino acid dehydrogenase (Cereibacter sphaeroides (strain ATCC 17023 / DSM 158 / JCM 6121 / CCUG 31486 / LMG 2827 / NBRC 12203 / NCIMB 8253 / ATH 2.4.1.) (Rhodobacter sphaeroides)).